Reading from the N-terminus, the 110-residue chain is Serum amyloid A protein (110 aa).

Positions 73-110 (GGSGRGAEDSRADQAANEWGRSGKDPNHFRPHGLPDKY) are disordered. Over residues 93-110 (RSGKDPNHFRPHGLPDKY) the composition is skewed to basic and acidic residues.

This sequence belongs to the SAA family. In terms of processing, this protein is the precursor of amyloid protein A, which is formed by the removal of residues from the C-terminal end. As to expression, expressed by the liver; secreted in plasma.

Functionally, major acute phase reactant. Apolipoprotein of the HDL complex. This is Serum amyloid A protein (SAA1) from Equus caballus (Horse).